A 945-amino-acid polypeptide reads, in one-letter code: Netrin receptor UNC5B (945 aa).

Residues 1–26 form the signal peptide; sequence MGARSGARGALLLALLLCWDPRLSQA. Residues 27–377 lie on the Extracellular side of the membrane; sequence GTDSGSEVLP…LEASGDAALY (351 aa). The 98-residue stretch at 48–145 folds into the Ig-like domain; sequence PYFLQEPQDA…AGTTKSRRAY (98 aa). 9 disulfide bridges follow: Cys-69/Cys-130, Cys-81/Cys-128, Cys-174/Cys-225, Cys-258/Cys-295, Cys-262/Cys-299, Cys-273/Cys-285, Cys-314/Cys-348, Cys-318/Cys-353, and Cys-326/Cys-338. Positions 147–242 constitute an Ig-like C2-type domain; sequence RIAYLRKNFD…KRRSTTATVI (96 aa). N-linked (GlcNAc...) asparagine glycosylation is present at Asn-222. 2 TSP type-1 domains span residues 246 to 300 and 302 to 354; these read NGGW…TICP and DGAW…GLCM. An N-linked (GlcNAc...) asparagine glycan is attached at Asn-347. The chain crosses the membrane as a helical span at residues 378–398; that stretch reads AGLVVAIFVVVAILMAVGVVV. At 399–945 the chain is on the cytoplasmic side; sequence YRRNCRDFDT…LVAVATDGDC (547 aa). Residue Cys-403 is the site of S-palmitoyl cysteine attachment. One can recognise a ZU5 domain in the interval 543 to 686; sequence SSVSGTFGCL…LGTYVFTGES (144 aa). Tyr-581 is subject to Phosphotyrosine. Positions 689 to 838 are UPA domain; it reads RSAVKRLQLA…AETPAGSLDT (150 aa). The tract at residues 707-725 is interaction with DCC; sequence SLEYSLRVYCLEDTPVALK. The region spanning 865 to 943 is the Death domain; the sequence is KICNSLDAPN…EMLVAVATDG (79 aa).

The protein belongs to the unc-5 family. As to quaternary structure, interacts with the cytoplasmic part of DCC. Interacts with GNAI2 via its cytoplasmic part. Interacts (via death domain) with DAPK1 (via death domain). Interacts (via extracellular domain) with FLRT3 (via extracellular domain); the interaction is direct. Interacts (via extracellular domain) with FLRT2 and FLRT3 (via extracellular domain), but has higher affinity for FLRT3. Identified in a complex with FLRT3 and ADGRL3; does not interact with ADGRL3 by itself. Phosphorylated on cytoplasmic tyrosine residues. In terms of processing, proteolytically cleaved by caspases during apoptosis. The cleavage does not take place when the receptor is associated with netrin ligand. Its cleavage by caspases is required to induce apoptosis. Post-translationally, palmitoylation is required for pro-apoptotic activity, but not for location at lipid rafts. In terms of tissue distribution, highly expressed in brain. Also expressed at lower level in developing lung, cartilage, kidney and hematopoietic and immune tissues.

It localises to the cell membrane. It is found in the membrane raft. In terms of biological role, receptor for netrin required for axon guidance. Mediates axon repulsion of neuronal growth cones in the developing nervous system upon ligand binding. Axon repulsion in growth cones may be caused by its association with DCC that may trigger signaling for repulsion. Functions as a netrin receptor that negatively regulates vascular branching during angiogenesis. Mediates retraction of tip cell filopodia on endothelial growth cones in response to netrin. It also acts as a dependence receptor required for apoptosis induction when not associated with netrin ligand. Mediates apoptosis by activating DAPK1. In the absence of NTN1, activates DAPK1 by reducing its autoinhibitory phosphorylation at Ser-308 thereby increasing its catalytic activity. The chain is Netrin receptor UNC5B (UNC5B) from Homo sapiens (Human).